Reading from the N-terminus, the 58-residue chain is Small ribosomal subunit protein bS21 (58 aa).

The tract at residues 37–58 is disordered; sequence FYEKPSVKRKRKSEAARKRKKF. The span at 43–58 shows a compositional bias: basic residues; it reads VKRKRKSEAARKRKKF.

This sequence belongs to the bacterial ribosomal protein bS21 family.

This is Small ribosomal subunit protein bS21 from Streptococcus sanguinis (strain SK36).